A 307-amino-acid polypeptide reads, in one-letter code: Oxygen-dependent coproporphyrinogen-III oxidase (307 aa).

A substrate-binding site is contributed by serine 97. The a divalent metal cation site is built by histidine 101 and histidine 111. The Proton donor role is filled by histidine 111. Residue 113–115 coordinates substrate; it reads NVR. 2 residues coordinate a divalent metal cation: histidine 152 and histidine 182. The interval 247–282 is important for dimerization; that stretch reads YVEFNLVWDRGTHFGLQSGGRTESILMSMPPLASWS. Residue 265–267 participates in substrate binding; sequence GGR.

Belongs to the aerobic coproporphyrinogen-III oxidase family. In terms of assembly, homodimer. It depends on a divalent metal cation as a cofactor.

The protein localises to the cytoplasm. The enzyme catalyses coproporphyrinogen III + O2 + 2 H(+) = protoporphyrinogen IX + 2 CO2 + 2 H2O. It functions in the pathway porphyrin-containing compound metabolism; protoporphyrin-IX biosynthesis; protoporphyrinogen-IX from coproporphyrinogen-III (O2 route): step 1/1. Involved in the heme biosynthesis. Catalyzes the aerobic oxidative decarboxylation of propionate groups of rings A and B of coproporphyrinogen-III to yield the vinyl groups in protoporphyrinogen-IX. The protein is Oxygen-dependent coproporphyrinogen-III oxidase of Polaromonas naphthalenivorans (strain CJ2).